The following is a 244-amino-acid chain: MFRRKLTALDYHNPAGFNCKDETEFRNFIVWLEDQKIRHYKIEDRGNLRNIHSSDWPKFFEKYLRDVNCPFKIQDRQEAIDWLLGLAVRLEYGDNAEKYKDLVPDNSKTADNATKNAEPLINLDVNNPDFKAGVMALANLLQIQRHDDYLVMLKAIRILVQERLTQDAVAKANQTKEGLPVALDKHILGFDTGDAVLNEAAQILRLLHIEELRELQTKINEAIVAVQAIIADPKTDHRLGKVGR.

Residues K20, K62, and K98 each carry the N6-acetyllysine modification.

This sequence belongs to the RTRAF family. As to quaternary structure, homodimer. Interacts with FAM98A (via N- and C-terminus). Interacts with NIN; which may prevent phosphorylation of NIN. Interacts with POLR2A. Component of a tRNA-splicing ligase complex with FAM98B, DDX1 and RTCB. (Microbial infection) Interacts with influenza A virus (IAV) RNA polymerase subunits PA, PB1 and PB2, and nucleocapsid NP. Associates with IAV polymerase complexes both in the nucleus and cytosol. Associates with IAV ribonucleoproteins (vRNP) packaged in virions. Interacts with hepatitis C virus core protein p19. Widely expressed. Expressed at high level in heart and skeletal muscle. Expressed at intermediate level in liver, pancreas, fetal brain and fetal lung. Weakly expressed in adult brain, adult lung, placenta, fetal liver and fetal kidney. Overexpressed in many brain tumors.

It is found in the nucleus. It localises to the cytoplasm. The protein resides in the cytosol. The protein localises to the perinuclear region. Its subcellular location is the cytoskeleton. It is found in the microtubule organizing center. It localises to the centrosome. RNA-binding protein involved in modulation of mRNA transcription by Polymerase II. Component of the tRNA-splicing ligase complex and is required for tRNA ligation. May be required for RNA transport. Its function is as follows. (Microbial infection) In case of infection by influenza virus A (IVA), is involved in viral replication. The polypeptide is RNA transcription, translation and transport factor protein (Homo sapiens (Human)).